The primary structure comprises 435 residues: Zinc finger CCCH domain-containing protein 16 (435 aa).

Residues 1–27 form a C3H1-type zinc finger; the sequence is MRKELCRNFQRGSCRYGENCRFLHPQQ. Positions 2 to 88 are 6 X 2 AA repeats of F-G; sequence RKELCRNFQR…ASTPTGGGAA (87 aa). Disordered stretches follow at residues 25-105 and 205-374; these read PQQA…DHKC and TPSI…SQNN. 2 repeat units span residues 34–35 and 36–37. Residues 39-51 show a composition bias toward low complexity; the sequence is QNQQQQQQQQQQN. 2 repeat units span residues 56-57 and 58-59. The span at 63–77 shows a compositional bias: polar residues; it reads GGSSRPNQFQNTWSR. The segment covering 78–99 has biased composition (low complexity); the sequence is TASTPTGGGAAASTQQTGKQTQ. Composition is skewed to polar residues over residues 205–320 and 328–339; these read TPSI…VNTP and SGFQTNPSTTFK. 2 repeat units span residues 343 to 344 and 359 to 360. Polar residues predominate over residues 351-374; it reads TTPQNNNIFGQSTPTPATNTSQNN.

As to quaternary structure, part of the nuclear pore complex (NPC). The NPC has an eight-fold symmetrical structure comprising a central transport channel and two rings, the cytoplasmic and nuclear rings, to which eight filaments are attached. The cytoplasmic filaments have loose ends, while the nuclear filaments are joined in a distal ring, forming a nuclear basket. NPCs are highly dynamic in configuration and composition, and can be devided in 3 subcomplexes, the NUP62 subcomplex, the NUP107-160 subcomplex and the NUP93 subcomplex, containing approximately 30 different nucleoporin proteins.

The protein localises to the nucleus envelope. The protein resides in the nucleus. Its subcellular location is the nuclear pore complex. This Arabidopsis thaliana (Mouse-ear cress) protein is Zinc finger CCCH domain-containing protein 16.